The following is a 942-amino-acid chain: Isoleucine--tRNA ligase (942 aa).

Positions 58 to 68 match the 'HIGH' region motif; it reads PYVNGSIHLGH. Glu-564 is an L-isoleucyl-5'-AMP binding site. Residues 605 to 609 carry the 'KMSKS' region motif; the sequence is KMSKS. Residue Lys-608 participates in ATP binding. Zn(2+) is bound by residues Cys-905, Cys-908, Cys-925, and Cys-928.

The protein belongs to the class-I aminoacyl-tRNA synthetase family. IleS type 1 subfamily. Monomer. Requires Zn(2+) as cofactor.

The protein resides in the cytoplasm. The enzyme catalyses tRNA(Ile) + L-isoleucine + ATP = L-isoleucyl-tRNA(Ile) + AMP + diphosphate. Its function is as follows. Catalyzes the attachment of isoleucine to tRNA(Ile). As IleRS can inadvertently accommodate and process structurally similar amino acids such as valine, to avoid such errors it has two additional distinct tRNA(Ile)-dependent editing activities. One activity is designated as 'pretransfer' editing and involves the hydrolysis of activated Val-AMP. The other activity is designated 'posttransfer' editing and involves deacylation of mischarged Val-tRNA(Ile). The sequence is that of Isoleucine--tRNA ligase from Blochmanniella pennsylvanica (strain BPEN).